A 271-amino-acid chain; its full sequence is Chymotrypsin-like elastase family member 2A (271 aa).

A signal peptide spans 1–16 (MIRTLLLSALVAGALS). Positions 17–30 (CGYPTYEVQHDVSR) are cleaved as a propeptide — activation peptide. Residues 31 to 269 (VVGGQEASPN…YIDWINSVIA (239 aa)) form the Peptidase S1 domain. An intrachain disulfide couples C60 to C76. Active-site charge relay system residues include H75 and D123. 3 cysteine pairs are disulfide-bonded: C157–C224, C188–C204, and C214–C245. The active-site Charge relay system is the S218.

The protein belongs to the peptidase S1 family. Elastase subfamily. As to quaternary structure, interacts with CPA1. Interacts with SERPINA1. In terms of tissue distribution, pancreas.

Its subcellular location is the secreted. The enzyme catalyses Preferential cleavage: Leu-|-Xaa, Met-|-Xaa and Phe-|-Xaa. Hydrolyzes elastin.. In terms of biological role, elastase that enhances insulin signaling and might have a physiologic role in cellular glucose metabolism. Circulates in plasma and reduces platelet hyperactivation, triggers both insulin secretion and degradation, and increases insulin sensitivity. The sequence is that of Chymotrypsin-like elastase family member 2A (Cela2a) from Rattus norvegicus (Rat).